A 984-amino-acid chain; its full sequence is MGFDDDDEDLVVYGTPIEREEDTSARKRRAVAEAGQLRALPAWKQEVRDEEGRRRFHGAFTGGFSAGYYNTVGTKEGWTPQTFTSSRKNRAEMKKQSIYSFLDEEDIKDMGGNALETSQQYDTFGFTATEHARKQASKEQKERPSAIPGPIPDELVVPATTSIGVKLLMKMGWRQGRSIRDAHADSLYESRREARKAFLALSGTKTGGQKIQVDSHKSDKDDGATESFEELHASGNTPVYVLHPKQDLHGLGFDPFKHAPEFKDRKRLQKSARDRNRSDVSMRGSLLISNSGQYAPGFGIGALEELGVEDEDIYASGFAYEQMEVDIEPSKTASDSNYKLEDRKRGVFLAFKIASSSEYKLERFDPPEIPSDFDGRHKFLTPRQDVNNLSDLAPPEVPAPEDTSLRLLIEGCAAMVARCGKHIEDFYKEKSKTNTQFNFLNEGDGCSYYARKLWEYQQKYIDQQKPDTVQSKSSDKLTAENRGKILGERPLDRSTKSSSSSFPAKEAIQLQSNLADNFVKPISLDGLPEYEKPFRNDPAKQARFEQFLKDKYQGGLRPANLIPTSTMSDVDRARERLDFEAAAETIEKGKEKKAMDPLSLLGLSGINEQRFVSSTESERSIPARDEKSIYPRREEFEWRPSPILCKRFDIVDPFMGKPFHVQRPRSKMDSLIFMSESTTRTNEVESSSIAPQHTSVAGATETEAKGAATDPEIESSSVQRPVDLYKAIFSDDSDDDMAEPLANQPVDPVKTSEDANMVLNRLVAEDFLESLGKELGLDVPPEKPTPPNVLFRSETPSTANAIGISRNRKAITCQEIKENESALDKEEIANASADVPSDNVEELGLKYEKQEHRAEKSRSRSSHRQTQSGSLDSDSTSDQHRSRERRSRHKIRSGTPGSDSSIEHHRSKKRKSHSKHRTRRSRSPYADSSDSQYTKRKHREKRHHRTRNPDTDSSDHEYEERHKSSSRRSSDKDRSRRRSRHHKR.

Residues 130–144 are compositionally biased toward basic and acidic residues; it reads EHARKQASKEQKERP. A disordered region spans residues 130-153; it reads EHARKQASKEQKERPSAIPGPIPD. Residues 160 to 202 enclose the G-patch domain; the sequence is TTSIGVKLLMKMGWRQGRSIRDAHADSLYESRREARKAFLALS. The stretch at 408–450 is one SURP motif repeat; sequence LIEGCAAMVARCGKHIEDFYKEKSKTNTQFNFLNEGDGCSYYA. 4 disordered regions span residues 464–503, 679–717, 775–806, and 820–984; these read QKPDTVQSKSSDKLTAENRGKILGERPLDRSTKSSSSSFP, TRTNEVESSSIAPQHTSVAGATETEAKGAATDPEIESSS, LGLDVPPEKPTPPNVLFRSETPSTANAIGISR, and ESAL…HHKR. Over residues 473 to 495 the composition is skewed to basic and acidic residues; the sequence is SSDKLTAENRGKILGERPLDRST. A compositionally biased stretch (polar residues) spans 679–695; that stretch reads TRTNEVESSSIAPQHTS. Positions 697-709 are enriched in low complexity; it reads AGATETEAKGAAT. A coiled-coil region spans residues 814 to 859; it reads QEIKENESALDKEEIANASADVPSDNVEELGLKYEKQEHRAEKSRS. Residues 843–858 show a composition bias toward basic and acidic residues; the sequence is LGLKYEKQEHRAEKSR. 3 stretches are compositionally biased toward basic residues: residues 882-892, 905-922, and 934-946; these read SRERRSRHKIR, HRSKKRKSHSKHRTRRSR, and TKRKHREKRHHRT. Positions 947–974 are enriched in basic and acidic residues; it reads RNPDTDSSDHEYEERHKSSSRRSSDKDR. Basic residues predominate over residues 975–984; the sequence is SRRRSRHHKR.

It is found in the nucleus. Functionally, functions as a component of microRNA (miRNA) and small interfering RNA (siRNA) biogenesis. May assist Dicer-like (DCL) proteins to efficiently process and/or recruit the precursors of miRNAs and siRNAs. This Oryza sativa subsp. japonica (Rice) protein is G patch domain-containing protein TGH homolog.